The sequence spans 312 residues: MRSPASTPSIRGGAFASSPILRHNHLPFLRLNPPSSSPTRSSPPSIQCSVQFRPCIDIHKGKVKQIVGSTLKDLKDDDGSDPITNFESDKSAAEYATLYKQDGLKGGHVIMLGADPFSKAASLEALHAYPGGLQVGGGINSDNCLSYIEEGASHVIVTSYVFNNGQMDLERLKDLVRIVGKERLVLDLSCRKKEGKYAIVTDRWQKFSDVSLDAKVMEFLANFADEFLVHGVDVEGKKLGIDEELVALLGKHSPIPVTYAGGVTVMDDLERIRTAGMDNVDVTVGSALDIFGGNLAYKDVVAWHNQQKVSVA.

The transit peptide at 1 to 67 directs the protein to the chloroplast; the sequence is MRSPASTPSI…IHKGKVKQIV (67 aa). Residue aspartate 57 participates in 1-(5-phospho-beta-D-ribosyl)-5-[(5-phospho-beta-D-ribosylamino)methylideneamino]imidazole-4-carboxamide binding. Glutamine 65 contacts 5-[(5-phospho-1-deoxy-D-ribulos-1-ylimino)methylamino]-1-(5-phospho-beta-D-ribosyl)imidazole-4-carboxamide. Residues glutamine 65 and isoleucine 66 each contribute to the Na(+) site. Glycine 68 is a 1-(5-phospho-beta-D-ribosyl)-5-[(5-phospho-beta-D-ribosylamino)methylideneamino]imidazole-4-carboxamide binding site. The 5-[(5-phospho-1-deoxy-D-ribulos-1-ylimino)methylamino]-1-(5-phospho-beta-D-ribosyl)imidazole-4-carboxamide site is built by histidine 108, glycine 138, threonine 158, and serine 159. The 1-(5-phospho-beta-D-ribosyl)-5-[(5-phospho-beta-D-ribosylamino)methylideneamino]imidazole-4-carboxamide site is built by glycine 138, threonine 158, and serine 159. Na(+)-binding residues include serine 159 and phenylalanine 162. The 1-(5-phospho-beta-D-ribosyl)-5-[(5-phospho-beta-D-ribosylamino)methylideneamino]imidazole-4-carboxamide site is built by aspartate 187, arginine 203, tryptophan 204, and histidine 230. Residue aspartate 187 participates in 5-[(5-phospho-1-deoxy-D-ribulos-1-ylimino)methylamino]-1-(5-phospho-beta-D-ribosyl)imidazole-4-carboxamide binding. A 5-[(5-phospho-1-deoxy-D-ribulos-1-ylimino)methylamino]-1-(5-phospho-beta-D-ribosyl)imidazole-4-carboxamide-binding site is contributed by tryptophan 204. Residue glutamate 235 participates in Na(+) binding. Residues glycine 236, glycine 262, glycine 285, and serine 286 each coordinate 1-(5-phospho-beta-D-ribosyl)-5-[(5-phospho-beta-D-ribosylamino)methylideneamino]imidazole-4-carboxamide. 5-[(5-phospho-1-deoxy-D-ribulos-1-ylimino)methylamino]-1-(5-phospho-beta-D-ribosyl)imidazole-4-carboxamide contacts are provided by glycine 236, glycine 262, glycine 285, and serine 286.

It belongs to the HisA/HisF family. Na(+) serves as cofactor.

The protein localises to the plastid. The protein resides in the chloroplast. The enzyme catalyses 1-(5-phospho-beta-D-ribosyl)-5-[(5-phospho-beta-D-ribosylamino)methylideneamino]imidazole-4-carboxamide = 5-[(5-phospho-1-deoxy-D-ribulos-1-ylimino)methylamino]-1-(5-phospho-beta-D-ribosyl)imidazole-4-carboxamide. The protein operates within amino-acid biosynthesis; L-histidine biosynthesis; L-histidine from 5-phospho-alpha-D-ribose 1-diphosphate: step 4/9. Functionally, component of the histidine biosynthesis pathway that catalyzes the isomerization of 5'-ProFAR (pro-phosphoribosyl formimino-5-aminoimidazole-4-carboxamide ribonucleotide, referred as 1-(5-phospho-beta-D-ribosyl)-5-[(5-phospho-beta-D-ribosylamino)methylideneamino]imidazole-4-carboxamide) to PrFAR (phosphoribulosyl formimino-5-aminoimidazole-4-carboxamide ribonucleotide, referred as 5-[(5-phospho-1-deoxy-D-ribulos-1-ylimino)methylamino]-1-(5-phospho-beta-D-ribosyl)imidazole-4-carboxamide). The protein is 1-(5-phosphoribosyl)-5-[(5-phosphoribosylamino)methylideneamino] imidazole-4-carboxamide isomerase HISN3, chloroplastic of Medicago truncatula (Barrel medic).